A 227-amino-acid chain; its full sequence is Isopentenyl-diphosphate Delta-isomerase 1 (227 aa).

K36 contacts substrate. Mg(2+) is bound by residues H40 and H51. The Nudix hydrolase domain maps to 49–199; sequence LLHRAFSVFL…EVKLTPWFKI (151 aa). 2 residues coordinate substrate: R70 and K74. C86 is an active-site residue. S87 serves as a coordination point for substrate. Residues E146 and E148 each contribute to the Mg(2+) site. E148 is an active-site residue. An N6-acetyllysine modification is found at K176. The Microbody targeting signal motif lies at 225–227; sequence HRM.

It belongs to the IPP isomerase type 1 family. As to quaternary structure, monomer. Mg(2+) is required as a cofactor.

It localises to the peroxisome. It catalyses the reaction isopentenyl diphosphate = dimethylallyl diphosphate. It functions in the pathway isoprenoid biosynthesis; dimethylallyl diphosphate biosynthesis; dimethylallyl diphosphate from isopentenyl diphosphate: step 1/1. In terms of biological role, catalyzes the 1,3-allylic rearrangement of the homoallylic substrate isopentenyl (IPP) to its highly electrophilic allylic isomer, dimethylallyl diphosphate (DMAPP). This is Isopentenyl-diphosphate Delta-isomerase 1 (IDI1) from Mesocricetus auratus (Golden hamster).